A 146-amino-acid polypeptide reads, in one-letter code: Mu-like prophage FluMu G protein 1 (146 aa).

This sequence to phage Mu protein G.

The protein is Mu-like prophage FluMu G protein 1 of Haemophilus influenzae (strain ATCC 51907 / DSM 11121 / KW20 / Rd).